The chain runs to 304 residues: Small ribosomal subunit protein uS3 (304 aa).

Residues 17–86 form the KH type-2 domain; sequence IDEFFAEELG…DPQVDVQEVD (70 aa). The segment at 216-304 is disordered; that stretch reads LLEGEPEDSE…DEMDEEGDDE (89 aa).

This sequence belongs to the universal ribosomal protein uS3 family. Part of the 30S ribosomal subunit.

Its function is as follows. Binds the lower part of the 30S subunit head. This is Small ribosomal subunit protein uS3 from Haloarcula marismortui (strain ATCC 43049 / DSM 3752 / JCM 8966 / VKM B-1809) (Halobacterium marismortui).